The sequence spans 95 residues: Small ribosomal subunit protein bS6 (95 aa).

It belongs to the bacterial ribosomal protein bS6 family.

Binds together with bS18 to 16S ribosomal RNA. The polypeptide is Small ribosomal subunit protein bS6 (Corynebacterium efficiens (strain DSM 44549 / YS-314 / AJ 12310 / JCM 11189 / NBRC 100395)).